The following is a 220-amino-acid chain: pH-response regulator palI/RIM9 homolog 1 (220 aa).

Residues 1–5 (MSHFK) are Cytoplasmic-facing. The chain crosses the membrane as a helical span at residues 6–26 (IVFLTSLSLALVFELFNTISV). Topologically, residues 27–89 (PITSHLFISE…NHAKYALSKL (63 aa)) are extracellular. Residues 90-110 (LLVHVLSFVCVLVFWLFAILI) traverse the membrane as a helical segment. The Cytoplasmic portion of the chain corresponds to 111 to 121 (CIKWLNTSKSV). A helical membrane pass occupies residues 122-142 (LLFAVGWSMVTFMVSLLGFLI). The Extracellular segment spans residues 143-155 (DVLMFASHVTWSS). The chain crosses the membrane as a helical span at residues 156–176 (WLMLVSAFFVALSGILLCLMI). Topologically, residues 177–220 (RDLSYRRFVKLQGEVDVCVPMTEPRDPDELNEIWKKKTSKREIL) are cytoplasmic.

This sequence belongs to the palI/RIM9 family.

The protein resides in the cell membrane. Functionally, required for the proteolytic cleavage of the transcription factor RIM101 in response to alkaline ambient pH. The protein is pH-response regulator palI/RIM9 homolog 1 of Kluyveromyces lactis (strain ATCC 8585 / CBS 2359 / DSM 70799 / NBRC 1267 / NRRL Y-1140 / WM37) (Yeast).